Consider the following 1034-residue polypeptide: Isoleucine--tRNA ligase (1034 aa).

The 'HIGH' region motif lies at 46–56 (PYCSGAIHLGT). Positions 598-602 (KMSKS) match the 'KMSKS' region motif. Residue K601 participates in ATP binding.

Belongs to the class-I aminoacyl-tRNA synthetase family. IleS type 2 subfamily. As to quaternary structure, monomer. It depends on Zn(2+) as a cofactor.

Its subcellular location is the cytoplasm. It catalyses the reaction tRNA(Ile) + L-isoleucine + ATP = L-isoleucyl-tRNA(Ile) + AMP + diphosphate. Functionally, catalyzes the attachment of isoleucine to tRNA(Ile). As IleRS can inadvertently accommodate and process structurally similar amino acids such as valine, to avoid such errors it has two additional distinct tRNA(Ile)-dependent editing activities. One activity is designated as 'pretransfer' editing and involves the hydrolysis of activated Val-AMP. The other activity is designated 'posttransfer' editing and involves deacylation of mischarged Val-tRNA(Ile). The protein is Isoleucine--tRNA ligase of Methanococcus maripaludis (strain DSM 14266 / JCM 13030 / NBRC 101832 / S2 / LL).